We begin with the raw amino-acid sequence, 525 residues long: Protein disulfide-isomerase A2 (525 aa).

The signal sequence occupies residues 1 to 21 (MSRQLLPVLLLLLLRASCPWG). Residues 27–152 (RSPSEEPPEE…IAEWLRRRVG (126 aa)) enclose the Thioredoxin 1 domain. Catalysis depends on nucleophile residues C71 and C74. C71 and C74 are oxidised to a cystine. N-linked (GlcNAc...) asparagine glycans are attached at residues N127 and N284. Positions 367-496 (VLNGQVKPYL…FSKFLDNGGV (130 aa)) constitute a Thioredoxin 2 domain. Residues C418 and C421 each act as nucleophile in the active site. A disulfide bond links C418 and C421. A disordered region spans residues 492–525 (DNGGVLPTEEPPEEPAAPFPEPPANSTMGSKEEL). The segment covering 505 to 514 (EPAAPFPEPP) has biased composition (pro residues). N-linked (GlcNAc...) asparagine glycosylation is present at N516. Positions 516–525 (NSTMGSKEEL) are enriched in polar residues. A Prevents secretion from ER motif is present at residues 522–525 (KEEL).

Belongs to the protein disulfide isomerase family. Monomer; predominantly as monomer under reducing conditions. Homodimer; disulfide-linked. Part of a large chaperone multiprotein complex comprising DNAJB11, HSP90B1, HSPA5, HYOU, PDIA2, PDIA4, PDIA6, PPIB, SDF2L1, UGGT1 and very small amounts of ERP29, but not, or at very low levels, CALR nor CANX. Post-translationally, the disulfide-linked homodimer exhibits an enhanced chaperone activity. In terms of processing, glycosylated. As to expression, highly expressed in pancreas (at protein level).

The protein localises to the endoplasmic reticulum lumen. It catalyses the reaction Catalyzes the rearrangement of -S-S- bonds in proteins.. Its function is as follows. Acts as an intracellular estrogen-binding protein. May be involved in modulating cellular levels and biological functions of estrogens in the pancreas. May act as a chaperone that inhibits aggregation of misfolded proteins. The protein is Protein disulfide-isomerase A2 (PDIA2) of Homo sapiens (Human).